A 706-amino-acid polypeptide reads, in one-letter code: Polyribonucleotide nucleotidyltransferase (706 aa).

Residues Asp-486 and Asp-492 each coordinate Mg(2+). Positions Pro-552 to Ile-611 constitute a KH domain. In terms of domain architecture, S1 motif spans Gly-621–Lys-689.

This sequence belongs to the polyribonucleotide nucleotidyltransferase family. The cofactor is Mg(2+).

It localises to the cytoplasm. The catalysed reaction is RNA(n+1) + phosphate = RNA(n) + a ribonucleoside 5'-diphosphate. Involved in mRNA degradation. Catalyzes the phosphorolysis of single-stranded polyribonucleotides processively in the 3'- to 5'-direction. The polypeptide is Polyribonucleotide nucleotidyltransferase (Thiobacillus denitrificans (strain ATCC 25259 / T1)).